A 271-amino-acid polypeptide reads, in one-letter code: Elongation factor Ts (271 aa).

The tract at residues 76-79 (TDFV) is involved in Mg(2+) ion dislocation from EF-Tu.

The protein belongs to the EF-Ts family.

Its subcellular location is the cytoplasm. Functionally, associates with the EF-Tu.GDP complex and induces the exchange of GDP to GTP. It remains bound to the aminoacyl-tRNA.EF-Tu.GTP complex up to the GTP hydrolysis stage on the ribosome. This chain is Elongation factor Ts, found in Mycolicibacterium vanbaalenii (strain DSM 7251 / JCM 13017 / BCRC 16820 / KCTC 9966 / NRRL B-24157 / PYR-1) (Mycobacterium vanbaalenii).